We begin with the raw amino-acid sequence, 565 residues long: 4-coumarate--CoA ligase-like 2 (565 aa).

Residues S221, S222, G223, T224, T225, and K229 each coordinate ATP. (E)-4-coumaroyl-AMP is bound at residue F265. Residue K286 participates in CoA binding. An SBD1 region spans residues 288–359 (DMAKLLSAVE…ENYPKVKILQ (72 aa)). Positions 337, 359, 360, and 364 each coordinate (E)-4-coumaroyl-AMP. Residues Q359, G360, T364, D445, and R460 each contribute to the ATP site. Residues 360 to 424 (GYGLTESTAI…IRSPTVMKGY (65 aa)) are SBD2. The (E)-4-coumaroyl-AMP site is built by K462 and K466. G469 is a binding site for CoA. Residue K551 participates in ATP binding. A Microbody targeting signal motif is present at residues 563 to 565 (SKL).

This sequence belongs to the ATP-dependent AMP-binding enzyme family. Mg(2+) serves as cofactor.

It localises to the peroxisome. The catalysed reaction is (E)-4-coumarate + ATP + CoA = (E)-4-coumaroyl-CoA + AMP + diphosphate. It catalyses the reaction (E)-4-coumarate + ATP + H(+) = (E)-4-coumaroyl-AMP + diphosphate. The enzyme catalyses (E)-4-coumaroyl-AMP + CoA = (E)-4-coumaroyl-CoA + AMP + H(+). Its function is as follows. Carboxylate--CoA ligase that may use 4-coumarate as substrate. Follows a two-step reaction mechanism, wherein the carboxylate substrate first undergoes adenylation by ATP, followed by a thioesterification in the presence of CoA to yield the final CoA thioester. The protein is 4-coumarate--CoA ligase-like 2 of Arabidopsis thaliana (Mouse-ear cress).